Here is a 106-residue protein sequence, read N- to C-terminus: Nucleoid-associated protein PD_1058 (106 aa).

The protein belongs to the YbaB/EbfC family. In terms of assembly, homodimer.

The protein localises to the cytoplasm. Its subcellular location is the nucleoid. Its function is as follows. Binds to DNA and alters its conformation. May be involved in regulation of gene expression, nucleoid organization and DNA protection. This chain is Nucleoid-associated protein PD_1058, found in Xylella fastidiosa (strain Temecula1 / ATCC 700964).